A 245-amino-acid chain; its full sequence is 1-(5-phosphoribosyl)-5-[(5-phosphoribosylamino)methylideneamino] imidazole-4-carboxamide isomerase (245 aa).

The active-site Proton acceptor is Asp-8. Asp-131 functions as the Proton donor in the catalytic mechanism.

Belongs to the HisA/HisF family.

Its subcellular location is the cytoplasm. It carries out the reaction 1-(5-phospho-beta-D-ribosyl)-5-[(5-phospho-beta-D-ribosylamino)methylideneamino]imidazole-4-carboxamide = 5-[(5-phospho-1-deoxy-D-ribulos-1-ylimino)methylamino]-1-(5-phospho-beta-D-ribosyl)imidazole-4-carboxamide. Its pathway is amino-acid biosynthesis; L-histidine biosynthesis; L-histidine from 5-phospho-alpha-D-ribose 1-diphosphate: step 4/9. This chain is 1-(5-phosphoribosyl)-5-[(5-phosphoribosylamino)methylideneamino] imidazole-4-carboxamide isomerase, found in Neisseria meningitidis serogroup C (strain 053442).